The primary structure comprises 338 residues: MKLTGKQTWVFEHPIFVNSAGTAAGPKEKDGPLGSLFDKTYDEMHCNQKSWEMAERQLMEDAVNVALQKNNLTKDDIDLLLAGDLLNQNVTANYVARHLKIPFLCMFGACSTSMETVAVASALVDGGFAKRALAATSSHNATAERQFRYPTEYGGQKPDTATSTVTGSGAVVISQTPGDIQITSATVGKVSDLGITDPFDMGSAMAPAAADTIKQHFKDLNRTADDYDLILTGDLSGVGSPIVKDILKEDGYPVGTKHDDCGLLIYTPDQQVFAGGSGCACSAVVTYSHIFKQLREGKLNRVFVVATGALLSPTMIQQKETIPTIAHGVVFERAGGAS.

The chain is Stage V sporulation protein AD (spoVAD) from Bacillus subtilis (strain 168).